The chain runs to 86 residues: uncharacterized protein (86 aa).

This is an uncharacterized protein from Sus scrofa (Pig).